Here is a 484-residue protein sequence, read N- to C-terminus: Bifunctional protein GlmU (484 aa).

Residues 1-240 (MSASRPAAVM…RTEVEGVNDR (240 aa)) are pyrophosphorylase. UDP-N-acetyl-alpha-D-glucosamine contacts are provided by residues 12 to 15 (LAAG), Lys-26, Gln-79, and 84 to 85 (GT). Asp-113 contributes to the Mg(2+) binding site. UDP-N-acetyl-alpha-D-glucosamine contacts are provided by Gly-150, Glu-165, Asn-180, and Asn-238. A Mg(2+)-binding site is contributed by Asn-238. Residues 241–261 (VQLAEARRLLNARLLEQLMRD) are linker. The segment at 262 to 484 (GVTVVDPAST…RARARSEEDR (223 aa)) is N-acetyltransferase. Residues Arg-343 and Lys-361 each coordinate UDP-N-acetyl-alpha-D-glucosamine. His-373 functions as the Proton acceptor in the catalytic mechanism. Residues Tyr-376 and Asn-387 each coordinate UDP-N-acetyl-alpha-D-glucosamine. Residues Ala-390, 396-397 (NY), Ser-415, and Ala-433 each bind acetyl-CoA. The disordered stretch occupies residues 457 to 484 (EGWVERKRPGTPAAQAAERARARSEEDR). The span at 474–484 (ERARARSEEDR) shows a compositional bias: basic and acidic residues.

This sequence in the N-terminal section; belongs to the N-acetylglucosamine-1-phosphate uridyltransferase family. It in the C-terminal section; belongs to the transferase hexapeptide repeat family. In terms of assembly, homotrimer. Mg(2+) serves as cofactor.

The protein resides in the cytoplasm. The enzyme catalyses alpha-D-glucosamine 1-phosphate + acetyl-CoA = N-acetyl-alpha-D-glucosamine 1-phosphate + CoA + H(+). The catalysed reaction is N-acetyl-alpha-D-glucosamine 1-phosphate + UTP + H(+) = UDP-N-acetyl-alpha-D-glucosamine + diphosphate. It participates in nucleotide-sugar biosynthesis; UDP-N-acetyl-alpha-D-glucosamine biosynthesis; N-acetyl-alpha-D-glucosamine 1-phosphate from alpha-D-glucosamine 6-phosphate (route II): step 2/2. Its pathway is nucleotide-sugar biosynthesis; UDP-N-acetyl-alpha-D-glucosamine biosynthesis; UDP-N-acetyl-alpha-D-glucosamine from N-acetyl-alpha-D-glucosamine 1-phosphate: step 1/1. It functions in the pathway bacterial outer membrane biogenesis; LPS lipid A biosynthesis. Its function is as follows. Catalyzes the last two sequential reactions in the de novo biosynthetic pathway for UDP-N-acetylglucosamine (UDP-GlcNAc). The C-terminal domain catalyzes the transfer of acetyl group from acetyl coenzyme A to glucosamine-1-phosphate (GlcN-1-P) to produce N-acetylglucosamine-1-phosphate (GlcNAc-1-P), which is converted into UDP-GlcNAc by the transfer of uridine 5-monophosphate (from uridine 5-triphosphate), a reaction catalyzed by the N-terminal domain. The sequence is that of Bifunctional protein GlmU from Thermobifida fusca (strain YX).